Reading from the N-terminus, the 361-residue chain is Protein RecA (361 aa).

68–75 lines the ATP pocket; the sequence is GPESSGKT. The disordered stretch occupies residues 342 to 361; sequence PEGAKENISAKDDVAVDTKE. Positions 344 to 361 are enriched in basic and acidic residues; it reads GAKENISAKDDVAVDTKE.

Belongs to the RecA family.

Its subcellular location is the cytoplasm. Functionally, can catalyze the hydrolysis of ATP in the presence of single-stranded DNA, the ATP-dependent uptake of single-stranded DNA by duplex DNA, and the ATP-dependent hybridization of homologous single-stranded DNAs. It interacts with LexA causing its activation and leading to its autocatalytic cleavage. This Clostridium beijerinckii (strain ATCC 51743 / NCIMB 8052) (Clostridium acetobutylicum) protein is Protein RecA.